We begin with the raw amino-acid sequence, 1009 residues long: MKTNFVILLLLLCVFAISPSQQEEINQHNPGIYHQKLLYKVQQWRTSLKESNSVELKLSLAAIVAGVLYFLAALISSACGIGSGGLFIPITTLVSRLDLKTGKRFLGQYLIWVILLLGQLHECKSCIEKERVALLDFKKYWMSITQESDLDYVFPTWNNDTKSDCCQWESIMCNPTSGRLIRLHVGASNLKENSLLNISLLHPFEEVRSLELSAGLNGFVDNVEGYKSLRKLKNLEILDLSYNNRFNNNILPFINAATSLTSLSLQNNSMEGPFPFEEIKDLTNLKLLDLSRNILKGPMQGLTHLKKLKALDLSNNVFSSIMELQVVCEMKNLWELDLRENKFVGQLPLCLGRLNKLRVLDLSSNQLNGNLPSTFNRLESLEYLSLLDNNFTGFFSFDPLANLTKLKVFKLSSTSDMLQIKTESEPKYQFQLSVVVIRVCSLEKIPSFLLQDNLFTIFQMPATIVHELQFLDFSVNDISGLLPDNIGYALPNLLRMNGSRNGFQGHLPSSMGEMVNITSLDLSYNNFSGKLPRRFVTGCFSLKHLKLSHNNFSGHFLPRETSFTSLEELRVDSNSFTGKIGVGLLSSNTTLSVLDMSNNFLTGDIPSWMSNLSGLTILSISNNFLEGTIPPSLLAIGFLSLIDLSGNLLSGSLPSRVGGEFGIKLFLHDNMLTGPIPDTLLEKVQILDLRYNQLSGSIPQFVNTESIYILLMKGNNLTGSMSRQLCDLRNIRLLDLSDNKLNGFIPSCLYNLSFGPEDTNSYVGTAITKITPFKFYESTFVVEDFVVISSSFQEIEIKFSMKRRYDSYFGATEFNNDVLDYMYGMDLSSNELSGVIPAELGSLSKLRVMNLSCNFLSSSIPSSFSNLKDIESLDLSHNMLQGSIPQQLTNLSSLVVFDVSYNNLSGIIPQGRQFNTFDEKSYLGNPLLCGPPTNRSCDAKKTSDESENGGEEEDDEAPVDMLAFYFSSASTYVTTLIGIFILMCFDCPLRRAWLRIVDASIASVKSMLP.

Positions Met-1–Gln-22 are cleaved as a signal peptide. The Extracellular segment spans residues Glu-23–Met-961. Residues Asn-159 and Asn-197 are each glycosylated (N-linked (GlcNAc...) asparagine). The LRR 1; degenerate repeat unit spans residues Phe-204–Lys-231. 25 LRR repeats span residues Leu-232–Asn-255, Ala-257–Asp-281, Leu-282–Leu-305, Lys-306–Glu-329, Lys-331–Leu-354, Asn-355–Arg-377, Glu-379–Asn-402, Thr-404–Lys-427, Leu-442–Val-465, His-466–Leu-490, Asn-492–Met-514, Val-515–Gly-538, Phe-540–Ser-565, Glu-567–Ser-587, Asn-588–Leu-612, Ser-613–Ile-636, Phe-638–Glu-660, Gly-662–Leu-681, Glu-682–Glu-705, Ile-707–Leu-728, Arg-729–Leu-752, Leu-819–Ser-842, Leu-843–Asn-866, Leu-867–Leu-891, and Ser-893–Thr-916. The N-linked (GlcNAc...) asparagine glycan is linked to Asn-267. 2 N-linked (GlcNAc...) asparagine glycosylation sites follow: Asn-390 and Asn-402. N-linked (GlcNAc...) asparagine glycans are attached at residues Asn-497, Asn-516, Asn-526, and Asn-551. Residues Asn-588 and Asn-611 are each glycosylated (N-linked (GlcNAc...) asparagine). Asn-716 and Asn-751 each carry an N-linked (GlcNAc...) asparagine glycan. N-linked (GlcNAc...) asparagine glycosylation is found at Asn-850, Asn-890, Asn-903, and Asn-934. A disordered region spans residues Asn-934–Asp-955. The span at Glu-945 to Asp-955 shows a compositional bias: acidic residues. Residues Leu-962 to Leu-982 traverse the membrane as a helical segment. Residues Met-983 to Pro-1009 are Cytoplasmic-facing.

The protein belongs to the RLP family.

The protein resides in the cell membrane. The chain is Putative receptor-like protein 8 from Arabidopsis thaliana (Mouse-ear cress).